The sequence spans 172 residues: Small ribosomal subunit protein uS5 (172 aa).

The S5 DRBM domain maps to 17-80; it reads LREKMISVNR…EQARRNMFKV (64 aa).

The protein belongs to the universal ribosomal protein uS5 family. As to quaternary structure, part of the 30S ribosomal subunit. Contacts proteins S4 and S8.

In terms of biological role, with S4 and S12 plays an important role in translational accuracy. Functionally, located at the back of the 30S subunit body where it stabilizes the conformation of the head with respect to the body. The sequence is that of Small ribosomal subunit protein uS5 from Burkholderia lata (strain ATCC 17760 / DSM 23089 / LMG 22485 / NCIMB 9086 / R18194 / 383).